Consider the following 204-residue polypeptide: Protein PAXX (204 aa).

One can recognise a PISA domain in the interval 37-79; that stretch reads FNLYVTDAAELWSTCFTPDSLAALKARFGLSAAEDITPRFRAA. Position 134 is a phosphoserine (Ser-134). The tract at residues 143–204 is disordered; it reads EETAVSPRKS…PAGGVDFDET (62 aa). A Phosphothreonine modification is found at Thr-145. Residues Ser-148 and Ser-152 each carry the phosphoserine modification. The mediates interaction with XRCC5/Ku80 and XRCC6/Ku70 and association with the non-homologous end joining core complex stretch occupies residues 171–204; sequence GPGPGVRRRCPGESLINPGFKSKKPAGGVDFDET. Positions 190–204 match the XLM motif; that stretch reads FKSKKPAGGVDFDET.

The protein belongs to the XRCC4-XLF family. PAXX subfamily. As to quaternary structure, homodimer. Interacts with the DNA-bound XRCC5/Ku80 and XRCC6/Ku70 heterodimer (Ku complex); the interaction is direct. Associated component of the non-homologous end joining (NHEJ) complex, composed of the core proteins PRKDC, LIG4, XRCC4, XRCC6/Ku70, XRCC5/Ku86 and NHEJ1/XLF. Interacts with POLL (DNA polymerase lambda); promoting POLL recruitment to double-strand breaks (DSBs) and stimulation of the end-filling activity of POLL. Phosphorylation may inhibit interaction with the DNA-bound XRCC5/Ku80 and XRCC6/Ku70 heterodimer (Ku complex).

Its subcellular location is the nucleus. The protein localises to the chromosome. The protein resides in the cytoplasm. Functionally, non-essential DNA repair protein involved in DNA non-homologous end joining (NHEJ); participates in double-strand break (DSB) repair and V(D)J recombination. May act as a scaffold required for accumulation of the Ku heterodimer, composed of XRCC5/Ku80 and XRCC6/Ku70, at double-strand break sites and promote the assembly and/or stability of the NHEJ machinery. Involved in NHEJ by promoting the ligation of blunt-ended DNA ends. Together with NHEJ1/XLF, collaborates with DNA polymerase lambda (POLL) to promote joining of non-cohesive DNA ends. Constitutes a non-essential component of classical NHEJ: has a complementary but distinct function with NHEJ1/XLF in DNA repair. Able to restrict infection by herpesvirus 1 (HSV-1) via an unknown mechanism. The protein is Protein PAXX of Homo sapiens (Human).